A 479-amino-acid polypeptide reads, in one-letter code: Ubiquinone biosynthesis monooxygenase COQ6, mitochondrial (479 aa).

The protein belongs to the UbiH/COQ6 family. As to quaternary structure, component of a multi-subunit COQ enzyme complex, composed of at least COQ3, COQ4, COQ5, COQ6, COQ7 and COQ9. FAD serves as cofactor.

It is found in the mitochondrion inner membrane. The catalysed reaction is 4-hydroxy-3-(all-trans-decaprenyl)benzoate + 2 reduced [2Fe-2S]-[ferredoxin] + O2 + 2 H(+) = 3,4-dihydroxy-5-(all-trans-decaprenyl)benzoate + 2 oxidized [2Fe-2S]-[ferredoxin] + H2O. The enzyme catalyses 2-methoxy-6-(all-trans-decaprenyl)phenol + 2 reduced [2Fe-2S]-[ferredoxin] + O2 + 2 H(+) = 2-methoxy-6-(all-trans-decaprenyl)benzene-1,4-diol + 2 oxidized [2Fe-2S]-[ferredoxin] + H2O. The protein operates within cofactor biosynthesis; ubiquinone biosynthesis. FAD-dependent monooxygenase required for two non-consecutive steps during ubiquinone biosynthesis. Required for the C5-ring hydroxylation during ubiquinone biosynthesis by catalyzing the hydroxylation of 4-hydroxy-3-(all-trans-decaprenyl)benzoic acid to 3,4-dihydroxy-5-(all-trans-decaprenyl)benzoic acid. Also acts downstream of COQ4, for the C1-hydroxylation during ubiquinone biosynthesis by catalyzing the hydroxylation of 2-methoxy-6-(all-trans-decaprenyl)phenol to 2-methoxy-6-(all-trans-decaprenyl)benzene-1,4-diol. The electrons required for the hydroxylation reaction are funneled indirectly to coq6 from NADPH via a ferredoxin/ferredoxin reductase system. This is Ubiquinone biosynthesis monooxygenase COQ6, mitochondrial from Schizosaccharomyces pombe (strain 972 / ATCC 24843) (Fission yeast).